Reading from the N-terminus, the 230-residue chain is 5'-methylthioadenosine/S-adenosylhomocysteine nucleosidase (230 aa).

The active-site Proton acceptor is glutamate 12. Substrate contacts are provided by residues glycine 78, isoleucine 152, and 173 to 174 (ME). Residue aspartate 197 is the Proton donor of the active site.

It belongs to the PNP/UDP phosphorylase family. MtnN subfamily.

The catalysed reaction is S-adenosyl-L-homocysteine + H2O = S-(5-deoxy-D-ribos-5-yl)-L-homocysteine + adenine. It carries out the reaction S-methyl-5'-thioadenosine + H2O = 5-(methylsulfanyl)-D-ribose + adenine. The enzyme catalyses 5'-deoxyadenosine + H2O = 5-deoxy-D-ribose + adenine. It functions in the pathway amino-acid biosynthesis; L-methionine biosynthesis via salvage pathway; S-methyl-5-thio-alpha-D-ribose 1-phosphate from S-methyl-5'-thioadenosine (hydrolase route): step 1/2. Its function is as follows. Catalyzes the irreversible cleavage of the glycosidic bond in both 5'-methylthioadenosine (MTA) and S-adenosylhomocysteine (SAH/AdoHcy) to adenine and the corresponding thioribose, 5'-methylthioribose and S-ribosylhomocysteine, respectively. Also cleaves 5'-deoxyadenosine, a toxic by-product of radical S-adenosylmethionine (SAM) enzymes, into 5-deoxyribose and adenine. This chain is 5'-methylthioadenosine/S-adenosylhomocysteine nucleosidase, found in Actinobacillus succinogenes (strain ATCC 55618 / DSM 22257 / CCUG 43843 / 130Z).